A 321-amino-acid chain; its full sequence is Ribonuclease Z (321 aa).

The Zn(2+) site is built by H62, H64, D66, H67, H139, D210, and H268. Residue D66 is the Proton acceptor of the active site.

It belongs to the RNase Z family. In terms of assembly, homodimer. The cofactor is Zn(2+).

The enzyme catalyses Endonucleolytic cleavage of RNA, removing extra 3' nucleotides from tRNA precursor, generating 3' termini of tRNAs. A 3'-hydroxy group is left at the tRNA terminus and a 5'-phosphoryl group is left at the trailer molecule.. In terms of biological role, zinc phosphodiesterase, which displays some tRNA 3'-processing endonuclease activity. Probably involved in tRNA maturation, by removing a 3'-trailer from precursor tRNA. The polypeptide is Ribonuclease Z (Trichodesmium erythraeum (strain IMS101)).